The primary structure comprises 96 residues: ESAT-6-like protein SAG1039 (96 aa).

Belongs to the WXG100 family. sagEsxA-like subfamily. As to quaternary structure, homodimer.

The sequence is that of ESAT-6-like protein SAG1039 from Streptococcus agalactiae serotype V (strain ATCC BAA-611 / 2603 V/R).